Reading from the N-terminus, the 126-residue chain is UPF0102 protein Mlg_2205 (126 aa).

The protein belongs to the UPF0102 family.

In Alkalilimnicola ehrlichii (strain ATCC BAA-1101 / DSM 17681 / MLHE-1), this protein is UPF0102 protein Mlg_2205.